The sequence spans 433 residues: UPF0597 protein DNO_0106 (433 aa).

Belongs to the UPF0597 family.

The chain is UPF0597 protein DNO_0106 from Dichelobacter nodosus (strain VCS1703A).